Consider the following 608-residue polypeptide: Protein SHQ1 homolog (608 aa).

Disordered stretches follow at residues 487–531 (DAGS…SFYS) and 543–608 (IVYE…ASTT). Over residues 489-498 (GSQGSSPQQQ) the composition is skewed to low complexity. Composition is skewed to acidic residues over residues 502-524 (DDLD…DESV) and 543-579 (IVYE…EDDS). A compositionally biased stretch (polar residues) spans 588–608 (EAEGNSVIEQCSNSETAASTT).

This sequence belongs to the SHQ1 family.

In terms of biological role, required for the quantitative accumulation of H/ACA ribonucleoproteins (RNPs). This chain is Protein SHQ1 homolog, found in Drosophila melanogaster (Fruit fly).